Here is a 443-residue protein sequence, read N- to C-terminus: ATP-dependent protease ATPase subunit HslU (443 aa).

ATP is bound by residues I18, 60-65 (GVGKTE), D256, E321, and R393.

It belongs to the ClpX chaperone family. HslU subfamily. In terms of assembly, a double ring-shaped homohexamer of HslV is capped on each side by a ring-shaped HslU homohexamer. The assembly of the HslU/HslV complex is dependent on binding of ATP.

The protein resides in the cytoplasm. In terms of biological role, ATPase subunit of a proteasome-like degradation complex; this subunit has chaperone activity. The binding of ATP and its subsequent hydrolysis by HslU are essential for unfolding of protein substrates subsequently hydrolyzed by HslV. HslU recognizes the N-terminal part of its protein substrates and unfolds these before they are guided to HslV for hydrolysis. This is ATP-dependent protease ATPase subunit HslU from Enterobacter sp. (strain 638).